The sequence spans 161 residues: MSIVTKSIVNADAEARYLSPGELDRIKSFVLSGQRRLRIAQILTDNRERIVKQAGQQLFQQRPDIVSPGGNAYGEEMTATCLRDLDYYLRLVTYGVVAGDIAPIEEIGLVGVKEMYNSLGTPISAVAEGIKAMKNVACSLLSGDDSAEAGFYFDYTIGAMQ.

Asn-71 is modified (N4-methylasparagine). Cys-81 contacts (2R,3E)-phycocyanobilin.

Belongs to the phycobiliprotein family. In terms of assembly, heterodimer of an alpha and a beta chain. In terms of processing, contains one covalently linked phycocyanobilin chromophore.

The protein localises to the plastid. It localises to the chloroplast thylakoid membrane. Its function is as follows. Light-harvesting photosynthetic bile pigment-protein from the phycobiliprotein complex. Allophycocyanin has a maximum absorption at approximately 650 nanometers. This Galdieria sulphuraria (Red alga) protein is Allophycocyanin alpha chain (apcA).